We begin with the raw amino-acid sequence, 467 residues long: NADH-quinone oxidoreductase subunit H (467 aa).

A run of 9 helical transmembrane segments spans residues 18–38 (WWLV…TVLF), 88–108 (AVYV…IAVI), 131–151 (LPIA…GIVL), 172–192 (MISY…YSGS), 206–226 (WYIV…VGET), 256–276 (FMLA…TLFL), 296–316 (WWPL…FIWL), 328–348 (LMKL…MLVA), and 363–383 (IALY…LVDM). Residues 389-467 (GKAADQPAET…PTDGKEASDG (79 aa)) form a disordered region. Pro residues predominate over residues 418–430 (PVPPMPGQQVPPV).

This sequence belongs to the complex I subunit 1 family. As to quaternary structure, NDH-1 is composed of 14 different subunits. Subunits NuoA, H, J, K, L, M, N constitute the membrane sector of the complex.

It localises to the cell membrane. The enzyme catalyses a quinone + NADH + 5 H(+)(in) = a quinol + NAD(+) + 4 H(+)(out). NDH-1 shuttles electrons from NADH, via FMN and iron-sulfur (Fe-S) centers, to quinones in the respiratory chain. The immediate electron acceptor for the enzyme in this species is believed to be ubiquinone. Couples the redox reaction to proton translocation (for every two electrons transferred, four hydrogen ions are translocated across the cytoplasmic membrane), and thus conserves the redox energy in a proton gradient. This subunit may bind ubiquinone. The polypeptide is NADH-quinone oxidoreductase subunit H (Streptomyces coelicolor (strain ATCC BAA-471 / A3(2) / M145)).